We begin with the raw amino-acid sequence, 519 residues long: Putative cytochrome P450 CYP13A1 (519 aa).

Cys-465 contributes to the heme binding site.

It belongs to the cytochrome P450 family. It depends on heme as a cofactor.

Its function is as follows. Cytochromes P450 are a group of heme-thiolate monooxygenases. They oxidize a variety of structurally unrelated compounds, including steroids, fatty acids, and xenobiotics. The polypeptide is Putative cytochrome P450 CYP13A1 (cyp-13A1) (Caenorhabditis elegans).